A 107-amino-acid chain; its full sequence is L-rhamnose mutarotase (107 aa).

Substrate is bound at residue Tyr18. His22 acts as the Proton donor in catalysis. Residues Tyr41 and Trp76–Trp77 contribute to the substrate site.

The protein belongs to the rhamnose mutarotase family. Homodimer.

It localises to the cytoplasm. It carries out the reaction alpha-L-rhamnose = beta-L-rhamnose. Its pathway is carbohydrate metabolism; L-rhamnose metabolism. In terms of biological role, involved in the anomeric conversion of L-rhamnose. The polypeptide is L-rhamnose mutarotase (Paraburkholderia phytofirmans (strain DSM 17436 / LMG 22146 / PsJN) (Burkholderia phytofirmans)).